The sequence spans 334 residues: Glycerol-3-phosphate dehydrogenase [NAD(P)+] (334 aa).

Residues Trp-13, Arg-33, and Lys-106 each coordinate NADPH. The sn-glycerol 3-phosphate site is built by Lys-106, Gly-137, and Ser-139. Residue Ala-141 participates in NADPH binding. Lys-192, Asp-245, Ser-255, Arg-256, and Asn-257 together coordinate sn-glycerol 3-phosphate. Residue Lys-192 is the Proton acceptor of the active site. Residue Arg-256 participates in NADPH binding. Residues Val-280 and Glu-282 each contribute to the NADPH site.

Belongs to the NAD-dependent glycerol-3-phosphate dehydrogenase family.

Its subcellular location is the cytoplasm. The catalysed reaction is sn-glycerol 3-phosphate + NAD(+) = dihydroxyacetone phosphate + NADH + H(+). It carries out the reaction sn-glycerol 3-phosphate + NADP(+) = dihydroxyacetone phosphate + NADPH + H(+). It functions in the pathway membrane lipid metabolism; glycerophospholipid metabolism. Functionally, catalyzes the reduction of the glycolytic intermediate dihydroxyacetone phosphate (DHAP) to sn-glycerol 3-phosphate (G3P), the key precursor for phospholipid synthesis. The chain is Glycerol-3-phosphate dehydrogenase [NAD(P)+] from Chlamydia abortus (strain DSM 27085 / S26/3) (Chlamydophila abortus).